A 212-amino-acid polypeptide reads, in one-letter code: 3-isopropylmalate dehydratase small subunit 1 (212 aa).

It belongs to the LeuD family. LeuD type 1 subfamily. Heterodimer of LeuC and LeuD.

It catalyses the reaction (2R,3S)-3-isopropylmalate = (2S)-2-isopropylmalate. It participates in amino-acid biosynthesis; L-leucine biosynthesis; L-leucine from 3-methyl-2-oxobutanoate: step 2/4. Catalyzes the isomerization between 2-isopropylmalate and 3-isopropylmalate, via the formation of 2-isopropylmaleate. The polypeptide is 3-isopropylmalate dehydratase small subunit 1 (Chromobacterium violaceum (strain ATCC 12472 / DSM 30191 / JCM 1249 / CCUG 213 / NBRC 12614 / NCIMB 9131 / NCTC 9757 / MK)).